Consider the following 339-residue polypeptide: Biotin synthase (339 aa).

In terms of domain architecture, Radical SAM core spans 55 to 282 (NAVQLSTLLS…KAVVRLSAGR (228 aa)). The [4Fe-4S] cluster site is built by C70, C74, and C77. [2Fe-2S] cluster is bound by residues C114, C145, C205, and R277.

The protein belongs to the radical SAM superfamily. Biotin synthase family. As to quaternary structure, homodimer. The cofactor is [4Fe-4S] cluster. [2Fe-2S] cluster is required as a cofactor.

The catalysed reaction is (4R,5S)-dethiobiotin + (sulfur carrier)-SH + 2 reduced [2Fe-2S]-[ferredoxin] + 2 S-adenosyl-L-methionine = (sulfur carrier)-H + biotin + 2 5'-deoxyadenosine + 2 L-methionine + 2 oxidized [2Fe-2S]-[ferredoxin]. It functions in the pathway cofactor biosynthesis; biotin biosynthesis; biotin from 7,8-diaminononanoate: step 2/2. Its function is as follows. Catalyzes the conversion of dethiobiotin (DTB) to biotin by the insertion of a sulfur atom into dethiobiotin via a radical-based mechanism. This Burkholderia ambifaria (strain ATCC BAA-244 / DSM 16087 / CCUG 44356 / LMG 19182 / AMMD) (Burkholderia cepacia (strain AMMD)) protein is Biotin synthase.